The sequence spans 450 residues: MRYLPHTEEEIQEMLEVVGKESLDDLFSSVPAECRYQGDIPIPAALTEWQLKDHFAALMSKNRVNQEHKVLIGAGSYDHYVPEILPSLMSRSEFLTAYTPYQPEVAQGTLQGIFEYQTLTARLLGTDAVNASMYDGASALAESALMSFRIARKKKTVALSAAIHPHYREVVATYLQATDFTIIELPVDAEGRTDLSSLAGIEGLASVAIQSPNFFGVVEDLQGCGEKIHDVDALFISCFSEALAYGLLKSPGECGADIICGEGQSFGLGRSYGGPGVGMMGCRDKLVRNMPGRIVGQTLDTKGKRGFVLTLATREQHIRREKATSNICSNQGICAMTAGMYMATLGGTGIRQLARLNYDKAAYLRSELIKLGAKPLFDAPVFNEFALRFPFDFERVREALKEESVVAGLSLEAYYPDLQGAYLFCATETLKKEDIDRIVSSIKKHALQEV.

It belongs to the GcvP family. N-terminal subunit subfamily. In terms of assembly, the glycine cleavage system is composed of four proteins: P, T, L and H. In this organism, the P 'protein' is a heterodimer of two subunits.

It catalyses the reaction N(6)-[(R)-lipoyl]-L-lysyl-[glycine-cleavage complex H protein] + glycine + H(+) = N(6)-[(R)-S(8)-aminomethyldihydrolipoyl]-L-lysyl-[glycine-cleavage complex H protein] + CO2. Its function is as follows. The glycine cleavage system catalyzes the degradation of glycine. The P protein binds the alpha-amino group of glycine through its pyridoxal phosphate cofactor; CO(2) is released and the remaining methylamine moiety is then transferred to the lipoamide cofactor of the H protein. The protein is Probable glycine dehydrogenase (decarboxylating) subunit 1 of Desulfotalea psychrophila (strain LSv54 / DSM 12343).